The sequence spans 347 residues: NADH-ubiquinone oxidoreductase chain 2 (347 aa).

Transmembrane regions (helical) follow at residues 26-46, 60-80, 96-116, 123-143, 151-171, 178-198, 200-220, 240-260, 274-294, and 325-345; these read WLLAWMGLEMNMLAMIPILTM, FLTQATASMLLMMAIMINFML, SMALAALMMKLGLAPFHFWVP, SLTSGMILLTWQKLAPLSILY, ITILTVSGLLSILVGGWGGLN, ILAYSSIAHMGWMLIIMPYNP, LTILNLLIYILMTLSIFMIMM, MMILLTITLLSLGGLPPLSGF, DSIILPMSMAMFALLNLYFYM, and LLPPLIILSTLTLPLTPFLSI.

Belongs to the complex I subunit 2 family. In terms of assembly, core subunit of respiratory chain NADH dehydrogenase (Complex I) which is composed of 45 different subunits. Interacts with TMEM242.

It localises to the mitochondrion inner membrane. It carries out the reaction a ubiquinone + NADH + 5 H(+)(in) = a ubiquinol + NAD(+) + 4 H(+)(out). Its function is as follows. Core subunit of the mitochondrial membrane respiratory chain NADH dehydrogenase (Complex I) which catalyzes electron transfer from NADH through the respiratory chain, using ubiquinone as an electron acceptor. Essential for the catalytic activity and assembly of complex I. The chain is NADH-ubiquinone oxidoreductase chain 2 from Dugong dugon (Dugong).